The following is a 2352-amino-acid chain: Highly reducing polyketide synthase ZEA2 (2352 aa).

Positions 9-433 constitute a Ketosynthase family 3 (KS3) domain; it reads PGPVAIVGLA…GTNGHVVLEA (425 aa). Catalysis depends on for beta-ketoacyl synthase activity residues C181, H316, and H356. Residues 544-875 are malonyl-CoA:ACP transacylase (MAT) domain; it reads FVFTGQGAQW…LATSLFLQGV (332 aa). The active-site For malonyltransferase activity is S634. Residues 923 to 1058 are N-terminal hotdog fold; the sequence is RSIIGAPVPK…GLITIDYEGN (136 aa). The PKS/mFAS DH domain occupies 923 to 1242; sequence RSIIGAPVPK…TSELEMDGAA (320 aa). The interval 925-1237 is dehydratase (DH) domain; that stretch reads IIGAPVPKMN…VIDFRTSELE (313 aa). H955 (proton acceptor; for dehydratase activity) is an active-site residue. The interval 1086–1242 is C-terminal hotdog fold; it reads PATYAKDRFY…TSELEMDGAA (157 aa). D1152 (proton donor; for dehydratase activity) is an active-site residue. The interval 1643-1955 is enoylreductase (ER) domain; sequence GLLDTLYFVD…QGKHRGKIVL (313 aa). The segment at 1979-2159 is catalytic ketoreductase (KRc) domain; that stretch reads ATYLFVGGLG…VSVNLGIMRD (181 aa). A Carrier domain is found at 2269–2346; it reads KATEIITNAL…SFAGKLASTS (78 aa). Position 2306 is an O-(pantetheine 4'-phosphoryl)serine (S2306).

Its pathway is mycotoxin biosynthesis. Its function is as follows. Highly reducing polyketide synthase; part of the gene cluster that mediates the biosynthesis of zearalenone (ZEA), a nonsteroid estrogen that is a contaminant of cereal grains and causes estrogenic disorders in humans and animals. The ZEA backbone is synthesized from a single acetyl-CoA molecule and eight malonyl-CoA molecules. The reducing polyketide synthase ZEA2 is proposed to synthesize a reduced hexaketide intermediate by using different combinations of its reductive domains during each round of condensation. The hexaketide thioester is then transacylated to the non-reducing polyketide synthase ZEA1 and is further condensed with three malonyl-CoAs without reductive tailoring to yield a mixed reduced/unreduced nonaketide. ZEA1 must be able to interact with ZEA2 to facilitate starter-unit acyltransfer and initiate polyketide biosynthesis. ZEA1 also mediates the required C2-C7 cyclization to form the resorcylate core and catalyzes the formation of the macrolactone. ZEB1 is then responsible for the chemical conversion of beta-zearalenonol (beta-ZOL) to ZEA in the biosynthetic pathway. This chain is Highly reducing polyketide synthase ZEA2, found in Gibberella zeae (strain ATCC MYA-4620 / CBS 123657 / FGSC 9075 / NRRL 31084 / PH-1) (Wheat head blight fungus).